Here is a 498-residue protein sequence, read N- to C-terminus: Flavin-dependent halogenase otaD (498 aa).

3 residues coordinate FAD: glycine 14, glycine 17, and glutamate 47. 2 residues coordinate chloride: serine 326 and glycine 327. Valine 328 contributes to the FAD binding site.

The protein belongs to the flavin-dependent halogenase family.

It catalyses the reaction ochratoxin B + FADH2 + chloride + O2 = ochratoxin A + FAD + 2 H2O. The protein operates within mycotoxin biosynthesis. Flavin-dependent halogenase; part of the gene cluster that mediates the biosynthesis of ochratoxin A (OTA), a mycotoxin composed of a chlorinated type I polyketide dihydroisocoumarin moiety linked to L-phenylalanine, and demonstrated to have nephrotoxic, immunotoxic, genotoxic, neurotoxic, and teratogenic properties. OtaD chlorinates ochratoxin B (OTB) at the C-5 position to form OTA. The pathway begins with the highly reducing polyketide synthase otaA that catalyzes the formation of the isocoumarin group during the initial stages of biosynthesis, starting from one acetate and 4 malonate units, to originate the characteristic pentaketide skeleton 7-methylmellein (7-MM) of the OTA molecule. The newly identified cyclase otaY might be involved in the polyketide cyclization reaction during the initial steps of the OTA biosynthesis. 7-MM is then oxidized into 7-carboxymellein (also called ochratoxin beta) by the cytochrome P450 monooxygenase otaC. The NRPS encoded by the otaB gene is involved in the linking of phenylalanine to the dihydroisocoumarin ring. The reaction catalyzed by NRPS results in the production of ochratoxin B (OTB), which is the non-chlorinated analog of OTA and which subsequently serves as the substrate of the halogenase otaD for chlorination activity to form the final molecular structure of OTA, containing a chlorine atom in the C-5 position of the molecule. In Aspergillus carbonarius (strain ITEM 5010), this protein is Flavin-dependent halogenase otaD.